We begin with the raw amino-acid sequence, 146 residues long: UPF0756 membrane protein PTH_1817 (146 aa).

4 consecutive transmembrane segments (helical) span residues 6–26 (LLIG…ILLI), 46–66 (MGLT…KASW), 69–89 (IISS…ALAT), and 105–125 (IVFG…GIPV).

It belongs to the UPF0756 family.

It localises to the cell membrane. This is UPF0756 membrane protein PTH_1817 from Pelotomaculum thermopropionicum (strain DSM 13744 / JCM 10971 / SI).